The primary structure comprises 882 residues: DNA mismatch repair protein MutS (882 aa).

627-634 serves as a coordination point for ATP; the sequence is GPNMAGKS.

It belongs to the DNA mismatch repair MutS family.

This protein is involved in the repair of mismatches in DNA. It is possible that it carries out the mismatch recognition step. This protein has a weak ATPase activity. The chain is DNA mismatch repair protein MutS from Anaeromyxobacter sp. (strain K).